Reading from the N-terminus, the 432-residue chain is Adenylosuccinate synthetase (432 aa).

GTP is bound by residues 13-19 (GDEGKGK) and 41-43 (GHT). The active-site Proton acceptor is aspartate 14. Positions 14 and 41 each coordinate Mg(2+). Residues 14 to 17 (DEGK), 39 to 42 (NAGH), threonine 130, arginine 144, glutamine 225, threonine 240, and arginine 304 contribute to the IMP site. Catalysis depends on histidine 42, which acts as the Proton donor. Substrate is bound at residue 300–306 (ATTGRRR). Residues arginine 306, 332 to 334 (KLD), and 415 to 417 (STG) contribute to the GTP site.

The protein belongs to the adenylosuccinate synthetase family. In terms of assembly, homodimer. The cofactor is Mg(2+).

The protein localises to the cytoplasm. The enzyme catalyses IMP + L-aspartate + GTP = N(6)-(1,2-dicarboxyethyl)-AMP + GDP + phosphate + 2 H(+). Its pathway is purine metabolism; AMP biosynthesis via de novo pathway; AMP from IMP: step 1/2. Plays an important role in the de novo pathway of purine nucleotide biosynthesis. Catalyzes the first committed step in the biosynthesis of AMP from IMP. The protein is Adenylosuccinate synthetase of Salmonella agona (strain SL483).